The primary structure comprises 316 residues: Ribosomal protein L11 methyltransferase (316 aa).

The S-adenosyl-L-methionine site is built by Thr-159, Gly-179, Asp-201, and Asn-243.

It belongs to the methyltransferase superfamily. PrmA family.

It localises to the cytoplasm. It catalyses the reaction L-lysyl-[protein] + 3 S-adenosyl-L-methionine = N(6),N(6),N(6)-trimethyl-L-lysyl-[protein] + 3 S-adenosyl-L-homocysteine + 3 H(+). Its function is as follows. Methylates ribosomal protein L11. The protein is Ribosomal protein L11 methyltransferase of Gloeobacter violaceus (strain ATCC 29082 / PCC 7421).